The following is a 284-amino-acid chain: Pollen allergen Phl p 5b (284 aa).

Positions alanine 1–threonine 19 are cleaved as a signal peptide. The interval alanine 1–aspartate 21 is disordered.

It belongs to the Poa p IX/Phl p VI allergen family. Homodimer; disulfide-linked.

Its function is as follows. Has ribonuclease activity. May be involved in host-pathogen interactions. In Phleum pratense (Common timothy), this protein is Pollen allergen Phl p 5b.